Consider the following 81-residue polypeptide: Antitoxin VapB28 (81 aa).

Antitoxin component of a type II toxin-antitoxin (TA) system. The protein is Antitoxin VapB28 (vapB28) of Mycobacterium tuberculosis (strain CDC 1551 / Oshkosh).